The sequence spans 1675 residues: QGNYYSYGGTTPGTPIGCTNLITLSNVKFFASSSSDGPDIPVLNSTDYWCSEFNWKNQSLTVDLGFVTFFDRLLVQGEPFTSRSVSEYFVLTSIDGINYTYILGTNGQSMKFVGPLFNGDQTRDTNLTAPVQARYVQFNPQEPMIAEDDSICMRVGVESCQLVPAAVNGAWSHWSPYGPCTHACLGTAKRTRTCADPAPVFGGSPCEGVNEEEKICNDCVGTVNGGWSPWGLWSRCSTTCNPGQRSRQRTCTNPSPKNGGTDCSGPSTQSEPCQVQFCPVDGGWSAWSGLSRCTRACGGGRQYQSRTCSNPFPGHGGRDCVGVRSLSFTCNTQCCPVHGGWSPWGSFSSCTRTCGGGQKSRTRVCNSPAPSCNGITCPGGNQDIQPCNQQTCPTSPSTSFPINGNYSNWGQWTACSVTCGQGTRERTRLCDNPAPAQGGSQCQGPSSELVGCTEIPCPVNGNWSSWGDWSNCSSGCGPGKSYRYRDCDNPAPANNGLNCTGPDQESKDCNSTACPVDGGWSAWSSTPCSATCGQGTLKRTRECNNPKPQYGGASCFGNETEQEVACNKGPCPTSPPTISPPTTGSPADSNIPELDLVFAVSATSSNRLATYNSMRDTINRFITTYGSNKVHYSIIVYGKAVQRVISFNHTFPPSVGELQEAISRHAPISGPTVLKNALQETQTIFQEIPSRPNAKKVLVVFTDSNSPSDGNLVQAVRPLENNKILVVSVGVGDVNRTELLTISPNPLDVLSVQPTAGPGALSKRIMDRILRRDIPLIDIGFALSATSSDFQDIFVKMKNVIRTIVERYGVERVKFSLIVYGQNVTTVLGDFNRNLTQADLVNYVNNLQRVPQNKNLDSALLEAESLFRQRARPNSKKVFVVLTDGVSTLSNANSLLINTAELRKSDVLILSVGFGSQTNQVGNQMNSVVFAPRDYIAVPNYPAERDVVIAETIMFKALEVNLPLIDLTFALSSSSILSQETFKLMKETVQSLVHTYGIDRIHYGVIVFGSVATRSFDFATNFPDQNELIRKVSQLTRSGGSPDLVAALKEARKVFQLKEVRPYARKVLVVMIDDESSANKNDLNEEVRALRNRSVLVIGVGIGTQTLPKDLGIITDDKRNTLKAGINKNRDELAREIISIILRPSGLSKWSSWSACSKTCRYLGKAGTQIRTRDCKIPELGCDGMRIDTVECNKMDCEGCGQRGPLNESAYTASSNSESPAFLAALNTSDPTAWCLINNENGGYVQLDLGELTRVYKVATKGEQQGDRWVTSYYLTLSEDGETFFDYKAAQRLSGNTDSTSVAFNVVNTTRPYRYVRFHPVNFKGEPCMQAAVFGCNEEKILPPPETIADQADAAKGILIVLWILAGILTFLLLMACCYYCCWHVCCGRGKKRKGLVYRERSIEDDGYLINDEKRWTLGSAPMTPVPRVREDEIQEVTIEMKEDNEQPLGVIQFGIETDETKEKHVTAEDVKSEKPKYSEEASSGTIKSGSTMMRMKANDGSDRRKRTKSEGDAIDAVDGDLDWSYLSDEQGTAFTNEAFVKSQEQFLEPPGSASFRGNKVDMRRSLSADELATLDYDLFEDRQGPLHTATLGRDGYMRMHKANQGSLPPSDGGREMGTVDVAIGGIRVPNSPKDDPIYDTAGQEIHLAVEQAGRSVYPLEDGGYRGEEWYSRWG.

The Extracellular portion of the chain corresponds to 1 to 1356; the sequence is QGNYYSYGGT…TIADQADAAK (1356 aa). The F5/8 type C 1 domain maps to 11 to 160; that stretch reads TPGTPIGCTN…ICMRVGVESC (150 aa). TSP type-1 domains follow at residues 168–220, 224–279, 281–336, 338–393, 403–458, 460–515, and 517–572; these read NGAW…NDCV, NGGW…QFCP, DGGW…QCCP, HGGW…QTCP, NGNY…IPCP, NGNW…TACP, and DGGW…GPCP. 21 disulfides stabilise this stretch: C180–C216, C184–C219, C194–C206, C236–C273, C240–C278, C251–C263, C293–C330, C297–C335, C308–C320, C350–C387, C354–C392, C365–C377, C415–C452, C419–C457, C430–C442, C472–C509, C476–C514, C487–C499, C528–C566, C532–C571, and C543–C555. A disordered region spans residues 567-588; the sequence is NKGPCPTSPPTISPPTTGSPAD. 3 VWFA domains span residues 595-769, 778-958, and 966-1141; these read DLVF…MDRI, DIGF…FKAL, and DLTF…ISII. In terms of domain architecture, TSP type-1 8 spans 1144–1198; it reads PSGLSKWSSWSACSKTCRYLGKAGTQIRTRDCKIPELGCDGMRIDTVECNKMDCE. 3 disulfide bridges follow: C1156–C1192, C1160–C1197, and C1175–C1182. Residues 1192 to 1336 form the F5/8 type C 2 domain; sequence CNKMDCEGCG…PCMQAAVFGC (145 aa). Residues 1357–1377 form a helical membrane-spanning segment; the sequence is GILIVLWILAGILTFLLLMAC. Residues 1378-1675 lie on the Cytoplasmic side of the membrane; the sequence is CYYCCWHVCC…RGEEWYSRWG (298 aa). Positions 1463-1480 are enriched in basic and acidic residues; the sequence is EKHVTAEDVKSEKPKYSE. Residues 1463 to 1491 are disordered; that stretch reads EKHVTAEDVKSEKPKYSEEASSGTIKSGS. A compositionally biased stretch (polar residues) spans 1481–1491; it reads EASSGTIKSGS.

In terms of tissue distribution, component of the acid-insoluble and acid-soluble organic matrix of the aragonitic skeleton (at protein level).

The protein localises to the membrane. This Acropora millepora (Staghorn coral) protein is Coadhesin.